A 21-amino-acid polypeptide reads, in one-letter code: Pollen allergen Ole e 7 (21 aa).

The polypeptide is Pollen allergen Ole e 7 (Olea europaea (Common olive)).